We begin with the raw amino-acid sequence, 426 residues long: Enolase (426 aa).

Q165 is a binding site for (2R)-2-phosphoglycerate. E207 (proton donor) is an active-site residue. Mg(2+) is bound by residues D244, E285, and D312. K337, R366, S367, and K388 together coordinate (2R)-2-phosphoglycerate. The active-site Proton acceptor is K337.

The protein belongs to the enolase family. Mg(2+) is required as a cofactor.

It localises to the cytoplasm. The protein resides in the secreted. It is found in the cell surface. The enzyme catalyses (2R)-2-phosphoglycerate = phosphoenolpyruvate + H2O. It functions in the pathway carbohydrate degradation; glycolysis; pyruvate from D-glyceraldehyde 3-phosphate: step 4/5. Functionally, catalyzes the reversible conversion of 2-phosphoglycerate (2-PG) into phosphoenolpyruvate (PEP). It is essential for the degradation of carbohydrates via glycolysis. The polypeptide is Enolase (Thermosynechococcus vestitus (strain NIES-2133 / IAM M-273 / BP-1)).